A 235-amino-acid chain; its full sequence is 7-cyano-7-deazaguanine synthase (235 aa).

12–22 is an ATP binding site; the sequence is FSGGQDSTTCL. Positions 200, 215, 218, and 221 each coordinate Zn(2+).

Belongs to the QueC family. It depends on Zn(2+) as a cofactor.

It carries out the reaction 7-carboxy-7-deazaguanine + NH4(+) + ATP = 7-cyano-7-deazaguanine + ADP + phosphate + H2O + H(+). It functions in the pathway purine metabolism; 7-cyano-7-deazaguanine biosynthesis. Functionally, catalyzes the ATP-dependent conversion of 7-carboxy-7-deazaguanine (CDG) to 7-cyano-7-deazaguanine (preQ(0)). The chain is 7-cyano-7-deazaguanine synthase from Leptothrix cholodnii (strain ATCC 51168 / LMG 8142 / SP-6) (Leptothrix discophora (strain SP-6)).